Consider the following 352-residue polypeptide: C-C chemokine receptor type 5 (352 aa).

At 1–30 (MDYQVSSPTYDIDYYTSEPCQKVNVKQIAA) the chain is on the extracellular side. Tyr-3 is modified (sulfotyrosine). O-linked (GalNAc...) serine glycosylation is found at Ser-6 and Ser-7. Residues Tyr-10, Tyr-14, and Tyr-15 each carry the sulfotyrosine modification. 2 disulfide bridges follow: Cys-20/Cys-269 and Cys-101/Cys-178. A helical transmembrane segment spans residues 31–58 (RLLPPLYSLVFIFGFVGNILVVLILINC). At 59–68 (KRLKSMTDIY) the chain is on the cytoplasmic side. A helical transmembrane segment spans residues 69–89 (LLNLAISDLFFLLTVPFWAHY). The Extracellular portion of the chain corresponds to 90 to 102 (AAARWDFGNTMCQ). The helical transmembrane segment at 103–124 (LLTGLYFIGFFSGIFFIILLTI) threads the bilayer. At 125–141 (DRYLAIVHAVFALKART) the chain is on the cytoplasmic side. A helical membrane pass occupies residues 142–166 (VTFGVVTSVITWVVAVFASLPGIIF). Topologically, residues 167–198 (TRSQREGLHYTCSSHFPYSQYQFWKNFQTLKI) are extracellular. Residues 199 to 218 (VILGLVLPLLVMVICYSGIL) traverse the membrane as a helical segment. Residues 219 to 235 (KTLLRCRNEKKRHRAVR) lie on the Cytoplasmic side of the membrane. A helical membrane pass occupies residues 236 to 260 (LIFTIMIVYFLFWAPYNIVLLLNTF). Residues 261 to 277 (QEFFGLNNCSSSNRLDQ) are Extracellular-facing. The helical transmembrane segment at 278 to 301 (AMQVTETLGMTHCCINPIIYAFVG) threads the bilayer. Topologically, residues 302–352 (EKFRNYLLVFFQKHIAKRFCKCCSIFQQEAPERASSVYTRSTGEQEISVGL) are cytoplasmic. 3 S-palmitoyl cysteine lipidation sites follow: Cys-321, Cys-323, and Cys-324. Phosphoserine; by BARK1 is present on residues Ser-336, Ser-337, Ser-342, and Ser-349.

It belongs to the G-protein coupled receptor 1 family. In terms of assembly, interacts with PRAF2. Efficient ligand binding to CCL3/MIP-1alpha and CCL4/MIP-1beta requires sulfation, O-glycosylation and sialic acid modifications. Glycosylation on Ser-6 is required for efficient binding of CCL4. Interacts with GRK2. Interacts with ARRB1 and ARRB2. Interacts with CNIH4. Interacts with S100A4; this interaction stimulates T-lymphocyte chemotaxis. Sulfated on at least 2 of the N-terminal tyrosines. Sulfation is required for efficient binding of the chemokines, CCL3 and CCL4. Post-translationally, palmitoylation in the C-terminal is important for cell surface expression. In terms of processing, phosphorylation on serine residues in the C-terminal is stimulated by binding CC chemokines especially by APO-RANTES. O-glycosylated, but not N-glycosylated. Ser-6 appears to be the major site even if Ser-7 may be also O-glycosylated. Also sialylated glycans present which contribute to chemokine binding. Thr-16 and Ser-17 may also be glycosylated and, if so, with small moieties such as a T-antigen.

The protein localises to the cell membrane. In terms of biological role, receptor for a number of inflammatory CC-chemokines including CCL3/MIP-1-alpha, CCL4/MIP-1-beta and RANTES and subsequently transduces a signal by increasing the intracellular calcium ion level. May play a role in the control of granulocytic lineage proliferation or differentiation. Participates in T-lymphocyte migration to the infection site by acting as a chemotactic receptor. The polypeptide is C-C chemokine receptor type 5 (CCR5) (Nasalis larvatus (Proboscis monkey)).